Here is a 346-residue protein sequence, read N- to C-terminus: Thioredoxin domain-containing protein R362 (346 aa).

Residues 212–345 (LTNLSNTEAN…IVKFIDETMS (134 aa)) form the Thioredoxin domain.

The protein resides in the virion. This chain is Thioredoxin domain-containing protein R362, found in Acanthamoeba polyphaga (Amoeba).